A 544-amino-acid chain; its full sequence is Cytochrome P450 monooxygenase notG' (544 aa).

An N-terminal signal peptide occupies residues 1-22 (MELPFSAMSLLYLLVGIAGVIS). A run of 2 helical transmembrane segments spans residues 42–62 (WYTL…GLPL) and 66–86 (AKAT…SLLL). Residues Asn-226 and Asn-404 are each glycosylated (N-linked (GlcNAc...) asparagine). Residue Cys-487 coordinates heme.

This sequence belongs to the cytochrome P450 family. Requires heme as cofactor.

It is found in the membrane. The protein operates within alkaloid biosynthesis. Cytochrome P450 monooxygenase; part of the gene cluster that mediates the biosynthesis of notoamide, a fungal indole alkaloid that belongs to a family of natural products containing a characteristic bicyclo[2.2.2]diazaoctane core. The first step of notoamide biosynthesis involves coupling of L-proline and L-tryptophan by the bimodular NRPS notE', to produce cyclo-L-tryptophan-L-proline called brevianamide F. The reverse prenyltransferase notF' then acts as a deoxybrevianamide E synthase and converts brevianamide F to deoxybrevianamide E via reverse prenylation at C-2 of the indole ring leading to the bicyclo[2.2.2]diazaoctane core. Deoxybrevianamide E is further hydroxylated at C-6 of the indole ring, likely catalyzed by the cytochrome P450 monooxygenase notG', to yield 6-hydroxy-deoxybrevianamide E. 6-hydroxy-deoxybrevianamide E is a specific substrate of the prenyltransferase notC' for normal prenylation at C-7 to produce 6-hydroxy-7-prenyl-deoxybrevianamide, also called notoamide S. As the proposed pivotal branching point in notoamide biosynthesis, notoamide S can be diverted to notoamide E through an oxidative pyran ring closure putatively catalyzed by either notH' cytochrome P450 monooxygenase or the notD' FAD-linked oxidoreductase. This step would be followed by an indole 2,3-epoxidation-initiated pinacol-like rearrangement catalyzed by the notB' FAD-dependent monooxygenase leading to the formation of notoamide C and notoamide D. On the other hand notoamide S is converted to notoamide T by notH' (or notD'), a bifunctional oxidase that also functions as the intramolecular Diels-Alderase responsible for generation of (-)-notoamide T. To generate antipodal (+)-notoaminide T, notH (or notD) in Aspergillus strain MF297-2 is expected to catalyze a Diels-Alder reaction leading to the opposite stereochemistry. The remaining oxidoreductase notD' (or notH') likely catalyzes the oxidative pyran ring formation to yield (-)-stephacidin A. The FAD-dependent monooxygenase notI' is highly similar to notB' and is predicted to catalyze a similar conversion from (-)-stephacidin A to (+)-notoamide B via the 2,3-epoxidation of (-)-stephacidin A followed by a pinacol-type rearrangement. Finally, it remains unclear which enzyme could be responsible for the final hydroxylation steps leading to notoamide A and sclerotiamide. The polypeptide is Cytochrome P450 monooxygenase notG' (Aspergillus versicolor).